A 216-amino-acid chain; its full sequence is Redox-sensing transcriptional repressor Rex (216 aa).

The H-T-H motif DNA-binding region spans Gln20–Phe59. Residue Gly94–Gly99 coordinates NAD(+).

This sequence belongs to the transcriptional regulatory Rex family. In terms of assembly, homodimer.

It localises to the cytoplasm. In terms of biological role, modulates transcription in response to changes in cellular NADH/NAD(+) redox state. The protein is Redox-sensing transcriptional repressor Rex of Lactococcus lactis subsp. lactis (strain IL1403) (Streptococcus lactis).